The following is a 352-amino-acid chain: Dihydroorotate dehydrogenase (quinone) (352 aa).

FMN contacts are provided by residues 68–72 (AGFDK) and Thr-92. Residue Lys-72 coordinates substrate. 117-121 (NAMGF) serves as a coordination point for substrate. FMN is bound by residues Asn-146 and Asn-179. Residue Asn-179 participates in substrate binding. The active-site Nucleophile is Ser-182. Asn-184 provides a ligand contact to substrate. FMN is bound by residues Lys-215 and Thr-243. 244–245 (NT) is a binding site for substrate. FMN is bound by residues Gly-263, Gly-292, and 313–314 (YS).

Belongs to the dihydroorotate dehydrogenase family. Type 2 subfamily. As to quaternary structure, monomer. The cofactor is FMN.

The protein localises to the cell membrane. The enzyme catalyses (S)-dihydroorotate + a quinone = orotate + a quinol. Its pathway is pyrimidine metabolism; UMP biosynthesis via de novo pathway; orotate from (S)-dihydroorotate (quinone route): step 1/1. Catalyzes the conversion of dihydroorotate to orotate with quinone as electron acceptor. The chain is Dihydroorotate dehydrogenase (quinone) from Sulfurimonas denitrificans (strain ATCC 33889 / DSM 1251) (Thiomicrospira denitrificans (strain ATCC 33889 / DSM 1251)).